We begin with the raw amino-acid sequence, 576 residues long: Probable proline--tRNA ligase, mitochondrial (576 aa).

Belongs to the class-II aminoacyl-tRNA synthetase family.

The protein localises to the mitochondrion. It carries out the reaction tRNA(Pro) + L-proline + ATP = L-prolyl-tRNA(Pro) + AMP + diphosphate. The chain is Probable proline--tRNA ligase, mitochondrial (AIM10) from Saccharomyces cerevisiae (strain ATCC 204508 / S288c) (Baker's yeast).